A 634-amino-acid chain; its full sequence is MSRLPVIVGFGGYNAAGRSSFHHGFRRMVIESMDPQARQETLAGLAVMMKLVKAEGGRYLAEDGTPLSPEDIERRYAERIFASTLVRRIEPQYLDPDAVHWHKVLELSPAEGQALTFKASPKQLPEPLPANWSIAPAEDGEVLVSIHERCEFKVDSYRALTVKSAGQLPTGFEPGELYNSRFHPRGLQMSVVAATDAIRSTGIDWKTIVDNVQPDEIAVFSGSIMSQLDDNGFGGLMQSRLKGHRVSAKQLPLGFNSMPTDFINAYVLGSVGMTGSITGACATFLYNLQKGIDVITSGQARVVIVGNSEAPILPECIEGYSAMGALATEEGLRLIEGRDDVDFRRASRPFGENCGFTLAESSQYVVLMDDELALRLGADIHGAVTDVFINADGFKKSISAPGPGNYLTVAKAVASAVQIVGLDTVRHASFVHAHGSSTPANRVTESEILDRVASAFGIDGWPVTAVKAYVGHSLATASADQLISALGTFKYGILPGIKTIDKVADDVHQQRLSISNRDMRQDKPLEVCFINSKGFGGNNASGVVLSPRIAEKMLRKRHGQAAFAAYVEKREQTRAAARAYDQRALQGDLEIIYNFGQDLIDEHAIEVSAEQVTVPGFSQPLVYKKDARFSDMLD.

A Ketosynthase family 3 (KS3) domain is found at 78-546; sequence ERIFASTLVR…GNNASGVVLS (469 aa). Catalysis depends on for beta-ketoacyl synthase activity residues C281, H434, and H472.

This sequence belongs to the thiolase-like superfamily. Beta-ketoacyl-ACP synthases family. In terms of assembly, homodimer.

The catalysed reaction is malonyl-[ACP] + acetyl-CoA + H(+) = 3-oxobutanoyl-[ACP] + CO2 + CoA. The protein operates within lipid metabolism; fatty acid biosynthesis. Involved in the initiation of the fatty acid biosynthesis. Catalyzes the condensation of acetyl coenzyme A (acetyl-CoA) with malonyl-acyl carrier protein (ACP) to make the fatty acid synthesis (FAS) primer beta-acetoacetyl-ACP. It can also use short-chain acyl-CoA as substrates, including butyryl-CoA, and hexanoyl-CoA, but does not use any of the longer chain acyl-CoA substrates. This is Beta-ketoacyl-[acyl-carrier-protein] synthase FabY (fabY) from Pseudomonas aeruginosa (strain ATCC 15692 / DSM 22644 / CIP 104116 / JCM 14847 / LMG 12228 / 1C / PRS 101 / PAO1).